The sequence spans 488 residues: DNA polymerase II small subunit (488 aa).

This sequence belongs to the DNA polymerase delta/II small subunit family. As to quaternary structure, heterodimer of a large subunit and a small subunit.

The enzyme catalyses DNA(n) + a 2'-deoxyribonucleoside 5'-triphosphate = DNA(n+1) + diphosphate. The catalysed reaction is Exonucleolytic cleavage in the 3'- to 5'-direction to yield nucleoside 5'-phosphates.. In terms of biological role, possesses two activities: a DNA synthesis (polymerase) and an exonucleolytic activity that degrades single-stranded DNA in the 3' to 5' direction. Has a template-primer preference which is characteristic of a replicative DNA polymerase. This is DNA polymerase II small subunit (polB) from Thermoplasma acidophilum (strain ATCC 25905 / DSM 1728 / JCM 9062 / NBRC 15155 / AMRC-C165).